The sequence spans 165 residues: Nucleotide-binding protein TGRD_519 (165 aa).

This sequence belongs to the YajQ family.

Its function is as follows. Nucleotide-binding protein. This is Nucleotide-binding protein TGRD_519 from Endomicrobium trichonymphae.